The chain runs to 506 residues: Histidine ammonia-lyase (506 aa).

A cross-link (5-imidazolinone (Ala-Gly)) is located at residues 143–145; it reads ASG. The residue at position 144 (Ser144) is a 2,3-didehydroalanine (Ser).

Belongs to the PAL/histidase family. Post-translationally, contains an active site 4-methylidene-imidazol-5-one (MIO), which is formed autocatalytically by cyclization and dehydration of residues Ala-Ser-Gly.

Its subcellular location is the cytoplasm. The catalysed reaction is L-histidine = trans-urocanate + NH4(+). The protein operates within amino-acid degradation; L-histidine degradation into L-glutamate; N-formimidoyl-L-glutamate from L-histidine: step 1/3. The protein is Histidine ammonia-lyase of Salmonella schwarzengrund (strain CVM19633).